The chain runs to 349 residues: Protein DMR6-LIKE OXYGENASE 1 (349 aa).

The 100-residue stretch at 197-296 folds into the Fe2OG dioxygenase domain; it reads HAQHMAFNYY…RLSIPTFYFP (100 aa). Tyr206 lines the 2-oxoglutarate pocket. Fe cation-binding residues include His221, Asp223, and His277. Residues Arg287 and Ser289 each coordinate 2-oxoglutarate.

It belongs to the iron/ascorbate-dependent oxidoreductase family. It depends on L-ascorbate as a cofactor. Requires Fe(2+) as cofactor.

It carries out the reaction salicylate + NADH + O2 + H(+) = 2,3-dihydroxybenzoate + NAD(+) + H2O. Its function is as follows. Converts salicylic acid (SA) to both 2,3-dihydroxybenzoic acid (2,3-DHBA) and 2,5-DHBA in vitro but only 2,3-DHBA in vivo. Component of a negative feedback regulation system of SA levels during senescence. Regulates both onset and progression of leaf senescence. Negative regulator of defense against Hyaloperonospora arabidopsidis. Functionally, (Microbial infection) Confers susceptibility to the downy mildew pathogen Hyaloperonospora arabidopsidis. The protein is Protein DMR6-LIKE OXYGENASE 1 of Arabidopsis thaliana (Mouse-ear cress).